The sequence spans 448 residues: L-seryl-tRNA(Sec) selenium transferase (448 aa).

Lys-284 carries the post-translational modification N6-(pyridoxal phosphate)lysine.

The protein belongs to the SelA family. Pyridoxal 5'-phosphate is required as a cofactor.

The protein localises to the cytoplasm. It catalyses the reaction L-seryl-tRNA(Sec) + selenophosphate + H(+) = L-selenocysteinyl-tRNA(Sec) + phosphate. It participates in aminoacyl-tRNA biosynthesis; selenocysteinyl-tRNA(Sec) biosynthesis; selenocysteinyl-tRNA(Sec) from L-seryl-tRNA(Sec) (bacterial route): step 1/1. In terms of biological role, converts seryl-tRNA(Sec) to selenocysteinyl-tRNA(Sec) required for selenoprotein biosynthesis. The chain is L-seryl-tRNA(Sec) selenium transferase from Nautilia profundicola (strain ATCC BAA-1463 / DSM 18972 / AmH).